We begin with the raw amino-acid sequence, 206 residues long: Large ribosomal subunit protein uL4 (206 aa).

Residues 47-77 (GTQSTKTRSEVRGGGIKPWRQKGTGRARQGS) are disordered.

Belongs to the universal ribosomal protein uL4 family. In terms of assembly, part of the 50S ribosomal subunit.

Its function is as follows. One of the primary rRNA binding proteins, this protein initially binds near the 5'-end of the 23S rRNA. It is important during the early stages of 50S assembly. It makes multiple contacts with different domains of the 23S rRNA in the assembled 50S subunit and ribosome. Forms part of the polypeptide exit tunnel. The sequence is that of Large ribosomal subunit protein uL4 from Clostridium beijerinckii (strain ATCC 51743 / NCIMB 8052) (Clostridium acetobutylicum).